A 372-amino-acid polypeptide reads, in one-letter code: Protein RecA (372 aa).

Position 77–84 (77–84 (GPESSGKT)) interacts with ATP.

The protein belongs to the RecA family.

The protein localises to the cytoplasm. In terms of biological role, can catalyze the hydrolysis of ATP in the presence of single-stranded DNA, the ATP-dependent uptake of single-stranded DNA by duplex DNA, and the ATP-dependent hybridization of homologous single-stranded DNAs. It interacts with LexA causing its activation and leading to its autocatalytic cleavage. In Corynebacterium diphtheriae (strain ATCC 700971 / NCTC 13129 / Biotype gravis), this protein is Protein RecA.